The chain runs to 381 residues: Probable tRNA sulfurtransferase (381 aa).

The region spanning 60–168 (REATEVLTRV…EGKAYIFVDK (109 aa)) is the THUMP domain. ATP is bound by residues 186–187 (LL), Lys-269, Gly-291, and Gln-300.

This sequence belongs to the ThiI family.

It is found in the cytoplasm. The catalysed reaction is [ThiI sulfur-carrier protein]-S-sulfanyl-L-cysteine + a uridine in tRNA + 2 reduced [2Fe-2S]-[ferredoxin] + ATP + H(+) = [ThiI sulfur-carrier protein]-L-cysteine + a 4-thiouridine in tRNA + 2 oxidized [2Fe-2S]-[ferredoxin] + AMP + diphosphate. The enzyme catalyses [ThiS sulfur-carrier protein]-C-terminal Gly-Gly-AMP + S-sulfanyl-L-cysteinyl-[cysteine desulfurase] + AH2 = [ThiS sulfur-carrier protein]-C-terminal-Gly-aminoethanethioate + L-cysteinyl-[cysteine desulfurase] + A + AMP + 2 H(+). It participates in cofactor biosynthesis; thiamine diphosphate biosynthesis. Its function is as follows. Catalyzes the ATP-dependent transfer of a sulfur to tRNA to produce 4-thiouridine in position 8 of tRNAs, which functions as a near-UV photosensor. Also catalyzes the transfer of sulfur to the sulfur carrier protein ThiS, forming ThiS-thiocarboxylate. This is a step in the synthesis of thiazole, in the thiamine biosynthesis pathway. The sulfur is donated as persulfide by IscS. This chain is Probable tRNA sulfurtransferase, found in Thermococcus kodakarensis (strain ATCC BAA-918 / JCM 12380 / KOD1) (Pyrococcus kodakaraensis (strain KOD1)).